The chain runs to 231 residues: UPF0758 protein aq_1610 (231 aa).

The MPN domain occupies 110–231; the sequence is SIRNPQEAFE…YFSFREEGVL (122 aa). Residues H180, H182, and D193 each contribute to the Zn(2+) site. The JAMM motif motif lies at 180 to 193; it reads HNHPQGEPSPSNED.

It belongs to the UPF0758 family.

The polypeptide is UPF0758 protein aq_1610 (Aquifex aeolicus (strain VF5)).